The sequence spans 922 residues: Lysine-specific demethylase 7A (922 aa).

The segment at 6–57 (PVYCVCRQPYDVSRFMIECDICKDWFHSSCVKVEEHQAADIDLYHCPNCEVL) adopts a PHD-type zinc-finger fold. A JmjC domain is found at 199 to 355 (FSDTKMADLV…MQLRCYEMEK (157 aa)). Thr248 provides a ligand contact to substrate. Fe cation is bound by residues His251 and Asp253. Lys268 is a binding site for substrate. His323 is a Fe cation binding site. Disordered regions lie at residues 445–490 (EEEG…TKTP), 565–607 (RSLY…TQKP), 622–711 (GSSE…EQEA), 754–773 (GKEH…HHVK), and 872–902 (LHPT…MATA). The segment covering 473 to 483 (HHSGRKARRLR) has biased composition (basic residues). A compositionally biased stretch (acidic residues) spans 648 to 666 (ESESSGDDDDEEEEEEEER). Basic and acidic residues-rich tracts occupy residues 667 to 683 (QEPI…RRLP) and 691 to 701 (PDHDSPQKREC).

It belongs to the JHDM1 histone demethylase family. JHDM1D subfamily. Fe(2+) is required as a cofactor.

Its subcellular location is the nucleus. Histone demethylase required for brain development. Specifically demethylates dimethylated 'Lys-9' and 'Lys-27' (H3K9me2 and H3K27me2, respectively) of histone H3 and monomethylated histone H4 'Lys-20' residue (H4K20Me1), thereby playing a central role in histone code. The protein is Lysine-specific demethylase 7A (kdm7a) of Xenopus tropicalis (Western clawed frog).